Here is a 363-residue protein sequence, read N- to C-terminus: Dihydroorotate dehydrogenase (quinone) (363 aa).

FMN contacts are provided by residues 77-81 (AGMDK) and Thr101. Lys81 contacts substrate. A substrate-binding site is contributed by 126–130 (NRMGF). Residues Ser155 and Asn188 each coordinate FMN. Asn188 lines the substrate pocket. Ser191 acts as the Nucleophile in catalysis. Substrate is bound at residue Asn193. Residues Lys234 and Thr262 each contribute to the FMN site. Position 263 to 264 (263 to 264 (NT)) interacts with substrate. FMN contacts are provided by residues Gly287, Gly316, and 337-338 (YT).

It belongs to the dihydroorotate dehydrogenase family. Type 2 subfamily. As to quaternary structure, monomer. FMN serves as cofactor.

It localises to the cell membrane. It catalyses the reaction (S)-dihydroorotate + a quinone = orotate + a quinol. It functions in the pathway pyrimidine metabolism; UMP biosynthesis via de novo pathway; orotate from (S)-dihydroorotate (quinone route): step 1/1. Catalyzes the conversion of dihydroorotate to orotate with quinone as electron acceptor. The chain is Dihydroorotate dehydrogenase (quinone) from Chloroflexus aurantiacus (strain ATCC 29366 / DSM 635 / J-10-fl).